Reading from the N-terminus, the 219-residue chain is Formate dehydrogenase 2 subunit beta (cytochrome c-553) (219 aa).

One can recognise a 4Fe-4S ferredoxin-type 1 domain in the interval 3–32; the sequence is KAFLIDTTRCTACRGCQLACKEWHDLPANV. The [4Fe-4S] cluster site is built by cysteine 12, cysteine 15, cysteine 18, cysteine 22, cysteine 74, cysteine 77, cysteine 82, cysteine 124, cysteine 141, cysteine 144, cysteine 156, and cysteine 160. A 4Fe-4S ferredoxin-type 2 domain is found at 132–171; the sequence is DPKTKRITKCDMCFDRVSAGMQPICVKTCPTGTMAFGERD.

As to quaternary structure, heterotrimer of cytochrome c3 FDH2C and formate dehydrogenase FDH2 alpha and beta subunits that forms the FdhABC(3) complex. [4Fe-4S] cluster serves as cofactor.

The protein resides in the periplasm. Functionally, beta chain of the formate dehydrogenase (FDH) that catalyzes the reversible two-electron oxidation of formate to carbon dioxide. The beta chain is an electron transfer unit. The polypeptide is Formate dehydrogenase 2 subunit beta (cytochrome c-553) (Nitratidesulfovibrio vulgaris (strain ATCC 29579 / DSM 644 / CCUG 34227 / NCIMB 8303 / VKM B-1760 / Hildenborough) (Desulfovibrio vulgaris)).